The primary structure comprises 205 residues: Pectinesterase inhibitor 3 (205 aa).

The N-terminal stretch at 1 to 25 (MAPTQNLFLVAIAFAVIFTASTVHG) is a signal peptide. Disulfide bonds link C38-C47 and C104-C156.

This sequence belongs to the PMEI family. In terms of tissue distribution, expressed in apical meristem.

It is found in the secreted. The protein localises to the extracellular space. It localises to the apoplast. Pectin methylesterase (PME) inhibitor that can target PMEs (e.g. PME2 and PME3) in a pH-dependent manner, mainly in slightly acidic conditions (pH 6.3 and 5.0) but not at pH 7.5; this processus relies on changes in the protonation of amino acids involved in intermolecular and intramolecular interactions. Regulates de-methylesterification of pectins in the apical meristem and affects primordia formation and phyllotactic patterning. This chain is Pectinesterase inhibitor 3, found in Arabidopsis thaliana (Mouse-ear cress).